The sequence spans 101 residues: Small ribosomal subunit protein uS14 (101 aa).

This sequence belongs to the universal ribosomal protein uS14 family. As to quaternary structure, part of the 30S ribosomal subunit. Contacts proteins S3 and S10.

Binds 16S rRNA, required for the assembly of 30S particles and may also be responsible for determining the conformation of the 16S rRNA at the A site. The polypeptide is Small ribosomal subunit protein uS14 (Salmonella schwarzengrund (strain CVM19633)).